A 148-amino-acid chain; its full sequence is Large ribosomal subunit protein bL9 (148 aa).

This sequence belongs to the bacterial ribosomal protein bL9 family.

In terms of biological role, binds to the 23S rRNA. The chain is Large ribosomal subunit protein bL9 from Acidithiobacillus ferrooxidans (strain ATCC 23270 / DSM 14882 / CIP 104768 / NCIMB 8455) (Ferrobacillus ferrooxidans (strain ATCC 23270)).